The primary structure comprises 219 residues: Ribose-5-phosphate isomerase A (219 aa).

Residues 28-31 (TGST), 81-84 (DSAD), and 94-97 (KGGG) each bind substrate. The Proton acceptor role is filled by Glu-103. Lys-121 contacts substrate.

It belongs to the ribose 5-phosphate isomerase family. As to quaternary structure, homodimer.

The catalysed reaction is aldehydo-D-ribose 5-phosphate = D-ribulose 5-phosphate. The protein operates within carbohydrate degradation; pentose phosphate pathway; D-ribose 5-phosphate from D-ribulose 5-phosphate (non-oxidative stage): step 1/1. Its function is as follows. Catalyzes the reversible conversion of ribose-5-phosphate to ribulose 5-phosphate. This is Ribose-5-phosphate isomerase A from Buchnera aphidicola subsp. Schizaphis graminum (strain Sg).